A 176-amino-acid chain; its full sequence is ATP-dependent protease subunit HslV (176 aa).

T2 is an active-site residue. Na(+) is bound by residues G158, C161, and T164.

It belongs to the peptidase T1B family. HslV subfamily. In terms of assembly, a double ring-shaped homohexamer of HslV is capped on each side by a ring-shaped HslU homohexamer. The assembly of the HslU/HslV complex is dependent on binding of ATP.

It localises to the cytoplasm. The catalysed reaction is ATP-dependent cleavage of peptide bonds with broad specificity.. Its activity is regulated as follows. Allosterically activated by HslU binding. Its function is as follows. Protease subunit of a proteasome-like degradation complex believed to be a general protein degrading machinery. This chain is ATP-dependent protease subunit HslV, found in Pasteurella multocida (strain Pm70).